We begin with the raw amino-acid sequence, 316 residues long: Transaldolase (316 aa).

Residue Lys132 is the Schiff-base intermediate with substrate of the active site.

It belongs to the transaldolase family. Type 1 subfamily. As to quaternary structure, homodimer.

The protein localises to the cytoplasm. It catalyses the reaction D-sedoheptulose 7-phosphate + D-glyceraldehyde 3-phosphate = D-erythrose 4-phosphate + beta-D-fructose 6-phosphate. It functions in the pathway carbohydrate degradation; pentose phosphate pathway; D-glyceraldehyde 3-phosphate and beta-D-fructose 6-phosphate from D-ribose 5-phosphate and D-xylulose 5-phosphate (non-oxidative stage): step 2/3. Functionally, transaldolase is important for the balance of metabolites in the pentose-phosphate pathway. The protein is Transaldolase of Vibrio campbellii (strain ATCC BAA-1116).